Consider the following 282-residue polypeptide: Bis(5'-nucleosyl)-tetraphosphatase, symmetrical (282 aa).

This sequence belongs to the Ap4A hydrolase family.

It catalyses the reaction P(1),P(4)-bis(5'-adenosyl) tetraphosphate + H2O = 2 ADP + 2 H(+). Hydrolyzes diadenosine 5',5'''-P1,P4-tetraphosphate to yield ADP. This is Bis(5'-nucleosyl)-tetraphosphatase, symmetrical from Escherichia coli O81 (strain ED1a).